We begin with the raw amino-acid sequence, 343 residues long: Methionine import ATP-binding protein MetN 1 (343 aa).

Residues 2-241 (IKLSNITKVF…PKTPLAQKFI (240 aa)) form the ABC transporter domain. Position 38–45 (38–45 (GASGAGKS)) interacts with ATP.

Belongs to the ABC transporter superfamily. Methionine importer (TC 3.A.1.24) family. In terms of assembly, the complex is composed of two ATP-binding proteins (MetN), two transmembrane proteins (MetI) and a solute-binding protein (MetQ).

It localises to the cell inner membrane. It carries out the reaction L-methionine(out) + ATP + H2O = L-methionine(in) + ADP + phosphate + H(+). It catalyses the reaction D-methionine(out) + ATP + H2O = D-methionine(in) + ADP + phosphate + H(+). Its function is as follows. Part of the ABC transporter complex MetNIQ involved in methionine import. Responsible for energy coupling to the transport system. The sequence is that of Methionine import ATP-binding protein MetN 1 from Salmonella typhi.